Here is a 212-residue protein sequence, read N- to C-terminus: Pyrrolidone-carboxylate peptidase (212 aa).

Active-site residues include glutamate 78, cysteine 141, and histidine 165.

Belongs to the peptidase C15 family. In terms of assembly, homotetramer.

The protein resides in the cytoplasm. The enzyme catalyses Release of an N-terminal pyroglutamyl group from a polypeptide, the second amino acid generally not being Pro.. Removes 5-oxoproline from various penultimate amino acid residues except L-proline. This Staphylococcus aureus (strain bovine RF122 / ET3-1) protein is Pyrrolidone-carboxylate peptidase.